Consider the following 493-residue polypeptide: Dipeptidase 3 (493 aa).

The first 35 residues, 1–35, serve as a signal peptide directing secretion; that stretch reads MQPAGLEGPRALGLRPLGHRLSLLGVLLLVPSLWV. The span at 41–60 shows a compositional bias: low complexity; sequence TPSPSSAPTTPEASNATTAP. Positions 41-74 are disordered; that stretch reads TPSPSSAPTTPEASNATTAPGIPNDTATSGVTSD. 2 disulfides stabilise this stretch: Cys-143/Cys-222 and Cys-294/Cys-326. An N-linked (GlcNAc...) asparagine glycan is attached at Asn-331. Ser-462 carries the GPI-anchor amidated serine lipid modification. Residues 463–493 constitute a propeptide, removed in mature form; sequence KAPPHPLPGLMATLTSLALILWLCCSGHRAV.

This sequence belongs to the metallo-dependent hydrolases superfamily. Peptidase M19 family. Homodimer; disulfide-linked. Interacts with TEX101; co-localized on the cell surface of spermatocytes, spermatids, and testicular spermatozoa, co-localized only in cytoplasmic droplets of caput and corpus epididymal sperm. In terms of tissue distribution, expressed in testis but not ovary.

It is found in the membrane. Functionally, lacks dipeptidase activity and is unable to hydrolyze cystinyl-bis-glycine. The absence of activity may be due to the inability of serine (instead of aspartate found in DPEP1/2) at position 356 to function as the acid/base catalyst and activate the nucleophilic water/hydroxide. Does not hydrolyze leukotriene D4 (LTD4) into leukotriene E4 (LTE4). Does not hydrolyze the beta-lactam antibiotic imipenem. This Mus musculus (Mouse) protein is Dipeptidase 3 (Dpep3).